We begin with the raw amino-acid sequence, 141 residues long: Mitochondrial import inner membrane translocase subunit Tim16 (141 aa).

Disordered regions lie at residues 34–53 (AARR…SNLR) and 108–141 (LDHE…RQRR). Residues 60 to 113 (EAKQILNIDDPKNVDAITKNYEHLFQVNERSKGGSFYIQSKVFRAKERLDHEIK) form a J-like region. The segment covering 108–118 (LDHEIKAHEQP) has biased composition (basic and acidic residues).

The protein belongs to the TIM16/PAM16 family. Probable component of the PAM complex at least composed of a mitochondrial HSP70 protein, Roe1, TIM44, blp/TIM16 and TIM14. Associates with the TIM23 complex. As to expression, expressed in distinct cells in the embryonic and larval nervous system.

It is found in the mitochondrion inner membrane. Functionally, regulates ATP-dependent protein translocation into the mitochondrial matrix. Essential for larval development. The sequence is that of Mitochondrial import inner membrane translocase subunit Tim16 (blp) from Drosophila melanogaster (Fruit fly).